A 91-amino-acid polypeptide reads, in one-letter code: Small ribosomal subunit protein uS17 (91 aa).

The protein belongs to the universal ribosomal protein uS17 family. In terms of assembly, part of the 30S ribosomal subunit.

Its function is as follows. One of the primary rRNA binding proteins, it binds specifically to the 5'-end of 16S ribosomal RNA. This Acidithiobacillus ferrooxidans (strain ATCC 23270 / DSM 14882 / CIP 104768 / NCIMB 8455) (Ferrobacillus ferrooxidans (strain ATCC 23270)) protein is Small ribosomal subunit protein uS17.